Reading from the N-terminus, the 450-residue chain is UDP-N-acetylmuramoylalanine--D-glutamate ligase (450 aa).

An ATP-binding site is contributed by 116–122 (GSNGKTT).

It belongs to the MurCDEF family.

The protein localises to the cytoplasm. It catalyses the reaction UDP-N-acetyl-alpha-D-muramoyl-L-alanine + D-glutamate + ATP = UDP-N-acetyl-alpha-D-muramoyl-L-alanyl-D-glutamate + ADP + phosphate + H(+). It participates in cell wall biogenesis; peptidoglycan biosynthesis. In terms of biological role, cell wall formation. Catalyzes the addition of glutamate to the nucleotide precursor UDP-N-acetylmuramoyl-L-alanine (UMA). This Dechloromonas aromatica (strain RCB) protein is UDP-N-acetylmuramoylalanine--D-glutamate ligase.